We begin with the raw amino-acid sequence, 272 residues long: Phosphatidylglycerol--prolipoprotein diacylglyceryl transferase (272 aa).

The next 4 membrane-spanning stretches (helical) occupy residues 15–35, 53–73, 90–110, and 117–137; these read LGPL…LVLF, AFAV…WHVV, IWEG…CFFV, and VPPF…LCFA. Residue R138 participates in a 1,2-diacyl-sn-glycero-3-phospho-(1'-sn-glycerol) binding. The next 3 helical transmembrane spans lie at 174–194, 199–219, and 237–257; these read FHPI…ILLV, VFVK…VLYG, and FGLD…VLIA.

Belongs to the Lgt family.

The protein resides in the cell membrane. The catalysed reaction is L-cysteinyl-[prolipoprotein] + a 1,2-diacyl-sn-glycero-3-phospho-(1'-sn-glycerol) = an S-1,2-diacyl-sn-glyceryl-L-cysteinyl-[prolipoprotein] + sn-glycerol 1-phosphate + H(+). The protein operates within protein modification; lipoprotein biosynthesis (diacylglyceryl transfer). In terms of biological role, catalyzes the transfer of the diacylglyceryl group from phosphatidylglycerol to the sulfhydryl group of the N-terminal cysteine of a prolipoprotein, the first step in the formation of mature lipoproteins. The protein is Phosphatidylglycerol--prolipoprotein diacylglyceryl transferase of Tropheryma whipplei (strain Twist) (Whipple's bacillus).